A 1270-amino-acid polypeptide reads, in one-letter code: DNA-directed RNA polymerase subunit beta (1270 aa).

It belongs to the RNA polymerase beta chain family. In terms of assembly, the RNAP catalytic core consists of 2 alpha, 1 beta, 1 beta' and 1 omega subunit. When a sigma factor is associated with the core the holoenzyme is formed, which can initiate transcription.

It carries out the reaction RNA(n) + a ribonucleoside 5'-triphosphate = RNA(n+1) + diphosphate. Its function is as follows. DNA-dependent RNA polymerase catalyzes the transcription of DNA into RNA using the four ribonucleoside triphosphates as substrates. This chain is DNA-directed RNA polymerase subunit beta, found in Bacteroides thetaiotaomicron (strain ATCC 29148 / DSM 2079 / JCM 5827 / CCUG 10774 / NCTC 10582 / VPI-5482 / E50).